We begin with the raw amino-acid sequence, 476 residues long: Aspartyl/glutamyl-tRNA(Asn/Gln) amidotransferase subunit B (476 aa).

The protein belongs to the GatB/GatE family. GatB subfamily. As to quaternary structure, heterotrimer of A, B and C subunits.

The catalysed reaction is L-glutamyl-tRNA(Gln) + L-glutamine + ATP + H2O = L-glutaminyl-tRNA(Gln) + L-glutamate + ADP + phosphate + H(+). It carries out the reaction L-aspartyl-tRNA(Asn) + L-glutamine + ATP + H2O = L-asparaginyl-tRNA(Asn) + L-glutamate + ADP + phosphate + 2 H(+). Allows the formation of correctly charged Asn-tRNA(Asn) or Gln-tRNA(Gln) through the transamidation of misacylated Asp-tRNA(Asn) or Glu-tRNA(Gln) in organisms which lack either or both of asparaginyl-tRNA or glutaminyl-tRNA synthetases. The reaction takes place in the presence of glutamine and ATP through an activated phospho-Asp-tRNA(Asn) or phospho-Glu-tRNA(Gln). This is Aspartyl/glutamyl-tRNA(Asn/Gln) amidotransferase subunit B from Lacticaseibacillus casei (strain BL23) (Lactobacillus casei).